We begin with the raw amino-acid sequence, 342 residues long: Ferredoxin--NADP reductase (342 aa).

8 residues coordinate FAD: C17, D36, Q44, Y49, V89, F124, D289, and T330.

Belongs to the ferredoxin--NADP reductase type 2 family. Homodimer. It depends on FAD as a cofactor.

It catalyses the reaction 2 reduced [2Fe-2S]-[ferredoxin] + NADP(+) + H(+) = 2 oxidized [2Fe-2S]-[ferredoxin] + NADPH. The chain is Ferredoxin--NADP reductase from Nitrobacter hamburgensis (strain DSM 10229 / NCIMB 13809 / X14).